Here is a 412-residue protein sequence, read N- to C-terminus: Aspartokinase (412 aa).

2 consecutive ACT domains span residues 266–340 (LTIR…GDTN) and 346–412 (IVGV…RQGE).

The protein belongs to the aspartokinase family.

It carries out the reaction L-aspartate + ATP = 4-phospho-L-aspartate + ADP. It functions in the pathway amino-acid biosynthesis; L-lysine biosynthesis via DAP pathway; (S)-tetrahydrodipicolinate from L-aspartate: step 1/4. It participates in amino-acid biosynthesis; L-methionine biosynthesis via de novo pathway; L-homoserine from L-aspartate: step 1/3. The protein operates within amino-acid biosynthesis; L-threonine biosynthesis; L-threonine from L-aspartate: step 1/5. This Pseudomonas aeruginosa (strain ATCC 15692 / DSM 22644 / CIP 104116 / JCM 14847 / LMG 12228 / 1C / PRS 101 / PAO1) protein is Aspartokinase (lysC).